Consider the following 168-residue polypeptide: S-ribosylhomocysteine lyase (168 aa).

Residues histidine 54, histidine 58, and cysteine 128 each contribute to the Fe cation site.

The protein belongs to the LuxS family. In terms of assembly, homodimer. Requires Fe cation as cofactor.

The catalysed reaction is S-(5-deoxy-D-ribos-5-yl)-L-homocysteine = (S)-4,5-dihydroxypentane-2,3-dione + L-homocysteine. Its function is as follows. Involved in the synthesis of autoinducer 2 (AI-2) which is secreted by bacteria and is used to communicate both the cell density and the metabolic potential of the environment. The regulation of gene expression in response to changes in cell density is called quorum sensing. Catalyzes the transformation of S-ribosylhomocysteine (RHC) to homocysteine (HC) and 4,5-dihydroxy-2,3-pentadione (DPD). The chain is S-ribosylhomocysteine lyase from Histophilus somni (strain 129Pt) (Haemophilus somnus).